The primary structure comprises 326 residues: MISTEEKIEFLKRLVEIYSPTGKENGVAKFLIKSFENYGIEAYLDDVGNVIAVKKGKGPLILLAGHMDTVPGYIPVRIENGELWGRGAVDAKGPLATFFFATIESDANIIFAGLVDEEGFSKGAKNLEVPKPDYIIVGEPSGTNGVTIGYKGSLTVKFTETVEKVHGSIGVGAAEKLIEKWLTIAKYFGEGFNSLSGRIVKFVAYEREFDFFGEMIVNLRTPPGYMPPKEWDIIDFVPAYEVSRTSPLVRAFVRAIRKAGYKPKLKKKTGTADTNILGPKYGVDAIAYGPGDSKLDHTPYERIKLREYLEAIEILKNAILELSSND.

His66 is a binding site for Zn(2+). Asp68 is a catalytic residue. Zn(2+) is bound at residue Asp90. The active-site Proton acceptor is Glu117. Residues Glu118, Glu139, and His297 each contribute to the Zn(2+) site.

It belongs to the peptidase M20A family. LysK subfamily. Zn(2+) is required as a cofactor. It depends on Co(2+) as a cofactor.

It localises to the cytoplasm. The enzyme catalyses [amino-group carrier protein]-C-terminal-gamma-(L-lysyl)-L-glutamate + H2O = [amino-group carrier protein]-C-terminal-L-glutamate + L-lysine. It catalyses the reaction [amino-group carrier protein]-C-terminal-gamma-(L-ornithyl)-L-glutamate + H2O = [amino-group carrier protein]-C-terminal-L-glutamate + L-ornithine. It participates in amino-acid biosynthesis; L-lysine biosynthesis via AAA pathway; L-lysine from L-alpha-aminoadipate (Thermus route): step 5/5. The protein operates within amino-acid biosynthesis; L-arginine biosynthesis. Its function is as follows. Catalyzes the release of L-lysine from [LysW]-gamma-L-lysine and the release of L-ornithine from [LysW]-L-ornithine. In Pyrococcus furiosus (strain ATCC 43587 / DSM 3638 / JCM 8422 / Vc1), this protein is Putative [LysW]-lysine/[LysW]-ornithine hydrolase.